Here is a 623-residue protein sequence, read N- to C-terminus: Endoglucanase 7 (623 aa).

At 1–79 (MHPGNVWGGS…LGCVSVSRTV (79 aa)) the chain is on the cytoplasmic side. Residues 80–100 (FLWTVGSIAVLFLVVALPIII) form a helical; Signal-anchor for type II membrane protein membrane-spanning segment. Over 101–623 (VKSLPRHKSA…TPPPPKAWKP (523 aa)) the chain is Extracellular. Residues N116, N221, N328, N349, N412, N429, and N464 are each glycosylated (N-linked (GlcNAc...) asparagine). H517 is an active-site residue. N548 carries an N-linked (GlcNAc...) asparagine glycan. The active site involves D565. Residue N571 is glycosylated (N-linked (GlcNAc...) asparagine). Residue E574 is part of the active site.

This sequence belongs to the glycosyl hydrolase 9 (cellulase E) family. Expressed in basal region of leaf blade and proximal parts of leaf and floral organ.

The protein localises to the membrane. The enzyme catalyses Endohydrolysis of (1-&gt;4)-beta-D-glucosidic linkages in cellulose, lichenin and cereal beta-D-glucans.. The sequence is that of Endoglucanase 7 (KOR2) from Arabidopsis thaliana (Mouse-ear cress).